A 115-amino-acid polypeptide reads, in one-letter code: MNFALILMTNTLLALLLMIITFWLPQLNSYMEKTNPYECGFDPVSPARIPFSMKFFLVAITFLLFDLEIALLLPLPWALQTTNLPLMVMSSLLLIIILTLSLAYEWLQKGLDWTE.

The next 3 helical transmembrane spans lie at 3–23, 55–75, and 84–104; these read FALI…ITFW, FFLV…LLPL, and LPLM…SLAY.

It belongs to the complex I subunit 3 family. Core subunit of respiratory chain NADH dehydrogenase (Complex I) which is composed of 45 different subunits. Interacts with TMEM186. Interacts with TMEM242.

The protein localises to the mitochondrion inner membrane. It catalyses the reaction a ubiquinone + NADH + 5 H(+)(in) = a ubiquinol + NAD(+) + 4 H(+)(out). Its function is as follows. Core subunit of the mitochondrial membrane respiratory chain NADH dehydrogenase (Complex I) which catalyzes electron transfer from NADH through the respiratory chain, using ubiquinone as an electron acceptor. Essential for the catalytic activity of complex I. The polypeptide is NADH-ubiquinone oxidoreductase chain 3 (Gorilla gorilla gorilla (Western lowland gorilla)).